Here is a 212-residue protein sequence, read N- to C-terminus: Large ribosomal subunit protein bL25 (212 aa).

The protein belongs to the bacterial ribosomal protein bL25 family. CTC subfamily. In terms of assembly, part of the 50S ribosomal subunit; part of the 5S rRNA/L5/L18/L25 subcomplex. Contacts the 5S rRNA. Binds to the 5S rRNA independently of L5 and L18.

Functionally, this is one of the proteins that binds to the 5S RNA in the ribosome where it forms part of the central protuberance. This Leptospira interrogans serogroup Icterohaemorrhagiae serovar copenhageni (strain Fiocruz L1-130) protein is Large ribosomal subunit protein bL25.